Consider the following 278-residue polypeptide: tRNA pseudouridine synthase A (278 aa).

Asp61 acts as the Nucleophile in catalysis. Tyr119 is a substrate binding site.

Belongs to the tRNA pseudouridine synthase TruA family. Homodimer.

The enzyme catalyses uridine(38/39/40) in tRNA = pseudouridine(38/39/40) in tRNA. Formation of pseudouridine at positions 38, 39 and 40 in the anticodon stem and loop of transfer RNAs. This Oleidesulfovibrio alaskensis (strain ATCC BAA-1058 / DSM 17464 / G20) (Desulfovibrio alaskensis) protein is tRNA pseudouridine synthase A.